An 88-amino-acid chain; its full sequence is UPF0250 protein Sbal_3280 (88 aa).

Belongs to the UPF0250 family.

The protein is UPF0250 protein Sbal_3280 of Shewanella baltica (strain OS155 / ATCC BAA-1091).